The chain runs to 518 residues: Anthranilate synthase component 1 (518 aa).

Residues S38 and 283-285 (PYM) contribute to the L-tryptophan site. 324–325 (GT) contributes to the chorismate binding site. E357 contacts Mg(2+). Residues Y445, R465, 479-481 (GAG), and G481 contribute to the chorismate site. Position 494 (E494) interacts with Mg(2+).

Belongs to the anthranilate synthase component I family. As to quaternary structure, heterotetramer consisting of two non-identical subunits: a beta subunit (TrpG) and a large alpha subunit (TrpE). Requires Mg(2+) as cofactor.

The enzyme catalyses chorismate + L-glutamine = anthranilate + pyruvate + L-glutamate + H(+). It participates in amino-acid biosynthesis; L-tryptophan biosynthesis; L-tryptophan from chorismate: step 1/5. Feedback inhibited by tryptophan. Part of a heterotetrameric complex that catalyzes the two-step biosynthesis of anthranilate, an intermediate in the biosynthesis of L-tryptophan. In the first step, the glutamine-binding beta subunit (TrpG) of anthranilate synthase (AS) provides the glutamine amidotransferase activity which generates ammonia as a substrate that, along with chorismate, is used in the second step, catalyzed by the large alpha subunit of AS (TrpE) to produce anthranilate. In the absence of TrpG, TrpE can synthesize anthranilate directly from chorismate and high concentrations of ammonia. This chain is Anthranilate synthase component 1 (trpE), found in Corynebacterium glutamicum (strain ATCC 13032 / DSM 20300 / JCM 1318 / BCRC 11384 / CCUG 27702 / LMG 3730 / NBRC 12168 / NCIMB 10025 / NRRL B-2784 / 534).